The sequence spans 572 residues: Proline--tRNA ligase (572 aa).

Belongs to the class-II aminoacyl-tRNA synthetase family. ProS type 1 subfamily. As to quaternary structure, homodimer.

The protein resides in the cytoplasm. The catalysed reaction is tRNA(Pro) + L-proline + ATP = L-prolyl-tRNA(Pro) + AMP + diphosphate. Catalyzes the attachment of proline to tRNA(Pro) in a two-step reaction: proline is first activated by ATP to form Pro-AMP and then transferred to the acceptor end of tRNA(Pro). As ProRS can inadvertently accommodate and process non-cognate amino acids such as alanine and cysteine, to avoid such errors it has two additional distinct editing activities against alanine. One activity is designated as 'pretransfer' editing and involves the tRNA(Pro)-independent hydrolysis of activated Ala-AMP. The other activity is designated 'posttransfer' editing and involves deacylation of mischarged Ala-tRNA(Pro). The misacylated Cys-tRNA(Pro) is not edited by ProRS. The polypeptide is Proline--tRNA ligase (Buchnera aphidicola subsp. Acyrthosiphon pisum (strain APS) (Acyrthosiphon pisum symbiotic bacterium)).